The primary structure comprises 218 residues: Riboflavin kinase (218 aa).

A disordered region spans residues 1 to 27 (MRPDGPRDPVAGPDSGPEPPYPVRLSG). Mg(2+)-binding residues include threonine 44 and asparagine 46. Glutamate 120 serves as the catalytic Nucleophile.

It belongs to the flavokinase family. Zn(2+) serves as cofactor. Mg(2+) is required as a cofactor.

The catalysed reaction is riboflavin + ATP = FMN + ADP + H(+). It functions in the pathway cofactor biosynthesis; FMN biosynthesis; FMN from riboflavin (ATP route): step 1/1. In terms of biological role, catalyzes the phosphorylation of riboflavin (vitamin B2) to form flavin mononucleotide (FMN) coenzyme. This chain is Riboflavin kinase (fmn1), found in Neosartorya fischeri (strain ATCC 1020 / DSM 3700 / CBS 544.65 / FGSC A1164 / JCM 1740 / NRRL 181 / WB 181) (Aspergillus fischerianus).